The chain runs to 562 residues: Abrin-c (562 aa).

A signal peptide spans 1–34; it reads MDKTLKLLILCLAWTCSFSALRCAARTYPPVATN. Gln-35 carries the pyrrolidone carboxylic acid modification. Glu-198 is a catalytic residue. Residue Asn-234 is glycosylated (N-linked (GlcNAc...) asparagine). 3 cysteine pairs are disulfide-bonded: Cys-281–Cys-303, Cys-320–Cys-339, and Cys-363–Cys-380. The 128-residue stretch at 307–434 folds into the Ricin B-type lectin 1 domain; the sequence is YEPTVRIGGR…YLMRQGWRTG (128 aa). The 1-alpha repeat unit spans residues 317–359; it reads DGMCVDVYDDGYHNGNRIIAWKCKDRLEENQLWTLKSDKTIRS. One copy of the 1-beta repeat lies at 360 to 400; sequence NGKCLTTEGYAPGNYVMIYDCTSAVAEATYWEIWDNGTIIN. Residues Asn-395 and Asn-435 are each glycosylated (N-linked (GlcNAc...) asparagine). A 1-gamma repeat occupies 403–435; it reads SALVLSAESSSMGGTLTVQTNEYLMRQGWRTGN. The region spanning 437–561 is the Ricin B-type lectin 2 domain; that stretch reads TSPFVTSISG…GKPNQIWLTL (125 aa). The stretch at 448–483 is one 2-alpha repeat; it reads SDLCMQAQGSNVWLADCDNNKKEQQWALYTDGSIRS. Cystine bridges form between Cys-451/Cys-464 and Cys-490/Cys-507. A 2-beta repeat occupies 487 to 526; the sequence is TNNCLTSKDHKQGSPIVLMACSNGWASQRWLFKNDGSIYN. The stretch at 529 to 562 is one 2-gamma repeat; sequence DDMVMDVKRSDPSLKEIILHPYHGKPNQIWLTLF.

In the N-terminal section; belongs to the ribosome-inactivating protein family. Type 2 RIP subfamily. Disulfide-linked dimer of A and B chains.

The catalysed reaction is Endohydrolysis of the N-glycosidic bond at one specific adenosine on the 28S rRNA.. Its function is as follows. The A chain is responsible for inhibiting protein synthesis through the catalytic inactivation of 60S ribosomal subunits by removing adenine from position 4,324 of 28S rRNA. Abrin-a is more toxic than ricin. In terms of biological role, the B chain is a galactose-specific lectin that facilitates the binding of abrin to the cell membrane that precedes endocytosis. The chain is Abrin-c from Abrus precatorius (Indian licorice).